We begin with the raw amino-acid sequence, 359 residues long: Threonine dehydratase biosynthetic, chloroplastic (359 aa).

2 ACT-like domains span residues 184 to 256 and 278 to 349; these read ALLA…NFSH and IFGE…LDNS.

This sequence belongs to the serine/threonine dehydratase family. Homotetramer. Requires pyridoxal 5'-phosphate as cofactor. Floral buds of untreated plants. After ABA treatment or mechanical wounding is mostly accumulated in leaves, to a lesser extent in stems, but not in roots. Expressed in anthers, carpel leaves, pith cells, sepals and petals. Not expressed in stomium, vascular bundles, epidermal cells or pollen mother cells.

The protein localises to the plastid. Its subcellular location is the chloroplast. It catalyses the reaction L-threonine = 2-oxobutanoate + NH4(+). The protein operates within amino-acid biosynthesis; L-isoleucine biosynthesis; 2-oxobutanoate from L-threonine: step 1/1. The sequence is that of Threonine dehydratase biosynthetic, chloroplastic from Solanum tuberosum (Potato).